Consider the following 473-residue polypeptide: MKTDTSTFLAQQIVRLRRRDQIRRLMQRDKTPLAILFMAAVVGTLTGLVGVAFEKTVSWVQNMRIGALVQVADHAFLLWPLAFILSALLAMVGYFLVRKFAPEAGGSGIPEIEGALEELRPVRWWRVLPVKFIGGMGTLGAGMVLGREGPTVQIGGNLGRMVLDVFRMRSAEARHTLLATGAAAGLSAAFNAPLAGILFIIEEMRPQFRYNLISIKAVFTGVIMSSIVFRIFNGEAPIIEVGKLSDAPVNTLWLYLILGIIFGCVGPVFNSLVLRTQDMFQRFHGGEIKKWVLMGGAIGGLCGILGLIEPAAAGGGFNLIPIAAAGNFSVGLLLFIFITRVVTTLLCFSSGAPGGIFAPMLALGTLLGTAFGMAAAVLFPQYHPEAGTFAIAGMGALMAASVRAPLTGIVLVLEMTDNYQLILPMIITCLGATLLAQFLGGKPLYSTILARTLAKQDAEQAAKNQNAPAGENT.

The Cytoplasmic portion of the chain corresponds to 1–32 (MKTDTSTFLAQQIVRLRRRDQIRRLMQRDKTP). The chain crosses the membrane as a helical span at residues 33-69 (LAILFMAAVVGTLTGLVGVAFEKTVSWVQNMRIGALV). The Periplasmic portion of the chain corresponds to 70-76 (QVADHAF). The helical transmembrane segment at 77-100 (LLWPLAFILSALLAMVGYFLVRKF) threads the bilayer. A Selectivity filter part_1 motif is present at residues 106–110 (GSGIP). Ser107 serves as a coordination point for chloride. The helical intramembrane region spans 109-116 (IPEIEGAL). Residues 117 to 123 (EELRPVR) lie on the Cytoplasmic side of the membrane. 2 consecutive transmembrane segments (helical) span residues 124 to 141 (WWRV…TLGA) and 148 to 166 (EGPT…LDVF). The Selectivity filter part_2 motif lies at 146 to 150 (GREGP). The Cytoplasmic portion of the chain corresponds to 167–176 (RMRSAEARHT). Intramembrane regions (helical) lie at residues 177–189 (LLAT…LSAA) and 193–201 (PLAGILFII). At 202 to 214 (EEMRPQFRYNLIS) the chain is on the cytoplasmic side. A helical transmembrane segment spans residues 215-232 (IKAVFTGVIMSSIVFRIF). The Periplasmic portion of the chain corresponds to 233 to 252 (NGEAPIIEVGKLSDAPVNTL). The chain crosses the membrane as a helical span at residues 253-281 (WLYLILGIIFGCVGPVFNSLVLRTQDMFQ). Over 282–287 (RFHGGE) the chain is Cytoplasmic. A helical transmembrane segment spans residues 288–309 (IKKWVLMGGAIGGLCGILGLIE). Residues 310–329 (PAAAGGGFNLIPIAAAGNFS) lie on the Periplasmic side of the membrane. The next 2 membrane-spanning stretches (helical) occupy residues 330 to 349 (VGLL…LCFS) and 355 to 376 (GIFA…MAAA). Residues 355–359 (GIFAP) carry the Selectivity filter part_3 motif. Chloride contacts are provided by Ile356 and Phe357. The Periplasmic segment spans residues 377 to 386 (VLFPQYHPEA). Residues 387–401 (GTFAIAGMGALMAAS) constitute an intramembrane region (helical). The note=Loop between two helices intramembrane region spans 402-404 (VRA). The segment at residues 405-416 (PLTGIVLVLEMT) is an intramembrane region (helical). An intramembrane region (note=Loop between two helices) is located at residues 417–421 (DNYQL). The chain crosses the membrane as a helical span at residues 422–438 (ILPMIITCLGATLLAQF). Topologically, residues 439–473 (LGGKPLYSTILARTLAKQDAEQAAKNQNAPAGENT) are cytoplasmic. Tyr445 serves as a coordination point for chloride.

Belongs to the chloride channel (TC 2.A.49) family. ClcA subfamily. Homodimer.

The protein resides in the cell inner membrane. It catalyses the reaction 2 chloride(in) + H(+)(out) = 2 chloride(out) + H(+)(in). Proton-coupled chloride transporter. Functions as antiport system and exchanges two chloride ions for 1 proton. Probably acts as an electrical shunt for an outwardly-directed proton pump that is linked to amino acid decarboxylation, as part of the extreme acid resistance (XAR) response. The protein is H(+)/Cl(-) exchange transporter ClcA of Salmonella paratyphi A (strain AKU_12601).